A 425-amino-acid polypeptide reads, in one-letter code: Glutamate-1-semialdehyde 2,1-aminomutase (425 aa).

The residue at position 264 (Lys-264) is an N6-(pyridoxal phosphate)lysine.

Belongs to the class-III pyridoxal-phosphate-dependent aminotransferase family. HemL subfamily. Homodimer. Pyridoxal 5'-phosphate serves as cofactor.

The protein localises to the cytoplasm. The catalysed reaction is (S)-4-amino-5-oxopentanoate = 5-aminolevulinate. Its pathway is porphyrin-containing compound metabolism; protoporphyrin-IX biosynthesis; 5-aminolevulinate from L-glutamyl-tRNA(Glu): step 2/2. The protein is Glutamate-1-semialdehyde 2,1-aminomutase of Hydrogenobaculum sp. (strain Y04AAS1).